We begin with the raw amino-acid sequence, 361 residues long: UDP-N-acetylglucosamine--N-acetylmuramyl-(pentapeptide) pyrophosphoryl-undecaprenol N-acetylglucosamine transferase (361 aa).

UDP-N-acetyl-alpha-D-glucosamine is bound by residues 13 to 15 (TGG), Asn125, Arg167, Ser196, Ile251, 270 to 275 (ALTVTE), and Gln296.

It belongs to the glycosyltransferase 28 family. MurG subfamily.

The protein resides in the cell inner membrane. It carries out the reaction di-trans,octa-cis-undecaprenyl diphospho-N-acetyl-alpha-D-muramoyl-L-alanyl-D-glutamyl-meso-2,6-diaminopimeloyl-D-alanyl-D-alanine + UDP-N-acetyl-alpha-D-glucosamine = di-trans,octa-cis-undecaprenyl diphospho-[N-acetyl-alpha-D-glucosaminyl-(1-&gt;4)]-N-acetyl-alpha-D-muramoyl-L-alanyl-D-glutamyl-meso-2,6-diaminopimeloyl-D-alanyl-D-alanine + UDP + H(+). It functions in the pathway cell wall biogenesis; peptidoglycan biosynthesis. Functionally, cell wall formation. Catalyzes the transfer of a GlcNAc subunit on undecaprenyl-pyrophosphoryl-MurNAc-pentapeptide (lipid intermediate I) to form undecaprenyl-pyrophosphoryl-MurNAc-(pentapeptide)GlcNAc (lipid intermediate II). The chain is UDP-N-acetylglucosamine--N-acetylmuramyl-(pentapeptide) pyrophosphoryl-undecaprenol N-acetylglucosamine transferase from Psychrobacter arcticus (strain DSM 17307 / VKM B-2377 / 273-4).